The following is a 140-amino-acid chain: Putative nickel-responsive regulator 3 (140 aa).

4 residues coordinate Ni(2+): H81, H92, H94, and C100.

This sequence belongs to the transcriptional regulatory CopG/NikR family. Ni(2+) serves as cofactor.

Its function is as follows. Transcriptional regulator. In Methanosarcina mazei (strain ATCC BAA-159 / DSM 3647 / Goe1 / Go1 / JCM 11833 / OCM 88) (Methanosarcina frisia), this protein is Putative nickel-responsive regulator 3.